Consider the following 614-residue polypeptide: 4-hydroxy-3-methylbut-2-en-1-yl diphosphate synthase (flavodoxin) (614 aa).

[4Fe-4S] cluster is bound by residues C522, C525, C556, and E563.

It belongs to the IspG family. It depends on [4Fe-4S] cluster as a cofactor.

It catalyses the reaction (2E)-4-hydroxy-3-methylbut-2-enyl diphosphate + oxidized [flavodoxin] + H2O + 2 H(+) = 2-C-methyl-D-erythritol 2,4-cyclic diphosphate + reduced [flavodoxin]. The protein operates within isoprenoid biosynthesis; isopentenyl diphosphate biosynthesis via DXP pathway; isopentenyl diphosphate from 1-deoxy-D-xylulose 5-phosphate: step 5/6. Its function is as follows. Converts 2C-methyl-D-erythritol 2,4-cyclodiphosphate (ME-2,4cPP) into 1-hydroxy-2-methyl-2-(E)-butenyl 4-diphosphate. The chain is 4-hydroxy-3-methylbut-2-en-1-yl diphosphate synthase (flavodoxin) from Phocaeicola vulgatus (strain ATCC 8482 / DSM 1447 / JCM 5826 / CCUG 4940 / NBRC 14291 / NCTC 11154) (Bacteroides vulgatus).